Reading from the N-terminus, the 159-residue chain is Transmembrane protein 92 (159 aa).

Positions 1–26 (MSQAWVPGLAPTLLFSLLAGPQKIAA) are cleaved as a signal peptide. Residues 27–57 (KCGLILACPKGFKCCGDSCCQENELFPGPVR) lie on the Extracellular side of the membrane. The chain crosses the membrane as a helical span at residues 58–78 (IFVIIFLVILSVFCICGLAKC). Residues 79 to 159 (FCRNCREPEP…DQRGIDNPAF (81 aa)) lie on the Cytoplasmic side of the membrane. The interval 122 to 159 (EVILKPSLGPTPTEPPPPYSFRPEEYTGDQRGIDNPAF) is disordered.

The protein resides in the membrane. The sequence is that of Transmembrane protein 92 (TMEM92) from Homo sapiens (Human).